The chain runs to 1984 residues: Spermatogenesis-associated protein 31H1 (1984 aa).

5 disordered regions span residues 448–467 (MGLT…TPGP), 1045–1067 (PMEE…QHSL), 1181–1287 (YRER…SDSK), 1326–1346 (RIGA…KPSQ), and 1439–1984 (QQPR…EATR). 3 stretches are compositionally biased toward polar residues: residues 450–463 (LTKS…SPGT), 1058–1067 (TRISESQHSL), and 1205–1226 (TQAS…QSPA). Residues 1238 to 1247 (SRPDLVEKTK) show a composition bias toward basic and acidic residues. Polar residues-rich tracts occupy residues 1458 to 1471 (TDSQ…TASV) and 1492 to 1508 (RNET…TPGT). 2 stretches are compositionally biased toward basic and acidic residues: residues 1532-1558 (DKLT…ERTR) and 1568-1579 (SPSERSQRSSLE). 3 consecutive repeat copies span residues 1593-1600 (PSRKNHSS), 1601-1608 (PSERSWRS), and 1609-1616 (PSQRNHCS). The 27 X 8 AA approximate tandem repeat of P-S-E-R-S-H-H-S stretch occupies residues 1593–1935 (PSRKNHSSPS…CSPSERSRRS (343 aa)). The span at 1599–1610 (SSPSERSWRSPS) shows a compositional bias: low complexity. The segment covering 1620–1630 (RSCHSLSERGL) has biased composition (basic and acidic residues). A compositionally biased stretch (basic residues) spans 1636 to 1647 (RSHRGPSQRRHH). 3 consecutive repeat copies span residues 1641–1648 (PSQRRHHS), 1649–1656 (PSERSHRS), and 1657–1664 (PSERSHRS). Basic and acidic residues predominate over residues 1648 to 1667 (SPSERSHRSPSERSHRSSSE). Basic residues predominate over residues 1668–1679 (RRHRSPSQRSHR). Over residues 1680-1691 (GPSERSHCSPSE) the composition is skewed to basic and acidic residues. 19 consecutive repeat copies span residues 1681–1688 (PSERSHCS), 1689–1696 (PSERRHRS), 1697–1704 (PSQRSHRG), 1705–1712 (PSERRHHS), 1713–1720 (PSKRSHRS), 1721–1728 (PARRSHRS), 1729–1736 (PSERSHHS), 1737–1744 (PSERSHHS), 1745–1752 (PSERRHHS), 1753–1760 (PSERSHCS), 1761–1768 (PSERSHCS), 1769–1776 (PSERRHRS), 1777–1784 (PSERRHHS), 1785–1792 (PSEKSHHS), 1793–1800 (PSERSHHS), 1801–1808 (PSERRRHS), 1848–1855 (PSEKSHLS), 1864–1871 (PSERRGHS), and 1880–1887 (PSERSHRS). Positions 1692–1727 (RRHRSPSQRSHRGPSERRHHSPSKRSHRSPARRSHR) are enriched in basic residues. Positions 1728 to 1869 (SPSERSHHSP…SRCSPSERRG (142 aa)) are enriched in basic and acidic residues. 3 stretches are compositionally biased toward basic and acidic residues: residues 1895 to 1917 (RTSE…EMRP), 1928 to 1941 (PSER…KEGL), and 1949 to 1959 (RPSHSLSRDFK). Tandem repeats lie at residues 1921-1928 (SGRNHCSP) and 1929-1935 (SERSRRS). A compositionally biased stretch (polar residues) spans 1960–1969 (NQTTLLGTTH).

Expressed in sperm (at protein level).

This chain is Spermatogenesis-associated protein 31H1, found in Homo sapiens (Human).